The chain runs to 118 residues: Holo-[acyl-carrier-protein] synthase (118 aa).

Residues D8 and E50 each coordinate Mg(2+).

This sequence belongs to the P-Pant transferase superfamily. AcpS family. The cofactor is Mg(2+).

It localises to the cytoplasm. It catalyses the reaction apo-[ACP] + CoA = holo-[ACP] + adenosine 3',5'-bisphosphate + H(+). Transfers the 4'-phosphopantetheine moiety from coenzyme A to a Ser of acyl-carrier-protein. In Leifsonia xyli subsp. xyli (strain CTCB07), this protein is Holo-[acyl-carrier-protein] synthase.